A 199-amino-acid polypeptide reads, in one-letter code: Octanoyltransferase (199 aa).

The BPL/LPL catalytic domain occupies 27-199 (SNSYDELWLL…FVQYFLTQFK (173 aa)). Substrate-binding positions include 66-73 (RGGQVTYH), 133-135 (SIG), and 146-148 (GIA). Residue Cys-164 is the Acyl-thioester intermediate of the active site.

The protein belongs to the LipB family.

It is found in the cytoplasm. The enzyme catalyses octanoyl-[ACP] + L-lysyl-[protein] = N(6)-octanoyl-L-lysyl-[protein] + holo-[ACP] + H(+). It functions in the pathway protein modification; protein lipoylation via endogenous pathway; protein N(6)-(lipoyl)lysine from octanoyl-[acyl-carrier-protein]: step 1/2. In terms of biological role, catalyzes the transfer of endogenously produced octanoic acid from octanoyl-acyl-carrier-protein onto the lipoyl domains of lipoate-dependent enzymes. Lipoyl-ACP can also act as a substrate although octanoyl-ACP is likely to be the physiological substrate. The sequence is that of Octanoyltransferase from Legionella pneumophila (strain Lens).